The primary structure comprises 145 residues: MISMLFPRSPLCTAAIVFYTCVCIPLGRLKKNGGDADAHDDDGYNLVGVMFGDKEKEEEICCPICLVEFEAEDAVTHLPRCAHLFHINCIEPWLLRGHLTCPLCRSFVLAPTPPTQNVNNAHSSSTLYLSIFFFFCIFLHLLGYL.

Residues 1–29 form the signal peptide; that stretch reads MISMLFPRSPLCTAAIVFYTCVCIPLGRL. The RING-type; atypical zinc finger occupies 62-105; sequence CPICLVEFEAEDAVTHLPRCAHLFHINCIEPWLLRGHLTCPLCR. The chain crosses the membrane as a helical span at residues 125–145; sequence STLYLSIFFFFCIFLHLLGYL.

Belongs to the RING-type zinc finger family. ATL subfamily.

The protein resides in the membrane. It carries out the reaction S-ubiquitinyl-[E2 ubiquitin-conjugating enzyme]-L-cysteine + [acceptor protein]-L-lysine = [E2 ubiquitin-conjugating enzyme]-L-cysteine + N(6)-ubiquitinyl-[acceptor protein]-L-lysine.. It functions in the pathway protein modification; protein ubiquitination. This is RING-H2 finger protein ATL18 (ATL18) from Arabidopsis thaliana (Mouse-ear cress).